Reading from the N-terminus, the 184-residue chain is ATP synthase subunit b, chloroplastic (184 aa).

Residues 27–49 traverse the membrane as a helical segment; sequence LATNLINLSVVLGVLIFFGKGVL.

It belongs to the ATPase B chain family. As to quaternary structure, F-type ATPases have 2 components, F(1) - the catalytic core - and F(0) - the membrane proton channel. F(1) has five subunits: alpha(3), beta(3), gamma(1), delta(1), epsilon(1). F(0) has four main subunits: a(1), b(1), b'(1) and c(10-14). The alpha and beta chains form an alternating ring which encloses part of the gamma chain. F(1) is attached to F(0) by a central stalk formed by the gamma and epsilon chains, while a peripheral stalk is formed by the delta, b and b' chains.

It is found in the plastid. It localises to the chloroplast thylakoid membrane. In terms of biological role, f(1)F(0) ATP synthase produces ATP from ADP in the presence of a proton or sodium gradient. F-type ATPases consist of two structural domains, F(1) containing the extramembraneous catalytic core and F(0) containing the membrane proton channel, linked together by a central stalk and a peripheral stalk. During catalysis, ATP synthesis in the catalytic domain of F(1) is coupled via a rotary mechanism of the central stalk subunits to proton translocation. Component of the F(0) channel, it forms part of the peripheral stalk, linking F(1) to F(0). The chain is ATP synthase subunit b, chloroplastic from Guizotia abyssinica (Niger).